A 249-amino-acid chain; its full sequence is Probable transcriptional regulatory protein HY04AAS1_0501 (249 aa).

This sequence belongs to the TACO1 family.

It is found in the cytoplasm. The chain is Probable transcriptional regulatory protein HY04AAS1_0501 from Hydrogenobaculum sp. (strain Y04AAS1).